The chain runs to 1048 residues: Platelet-derived growth factor receptor beta (1048 aa).

A signal peptide spans Met-1–Cys-30. Residues Leu-31–Val-528 lie on the Extracellular side of the membrane. Residues Pro-35–Pro-124 form the Ig-like C2-type 1 domain. Disulfide bonds link Cys-52–Cys-108 and Cys-153–Cys-194. Residues Asn-87, Asn-159, Asn-224, and Asn-239 are each glycosylated (N-linked (GlcNAc...) asparagine). 2 Ig-like C2-type domains span residues Pro-216–Asn-309 and Ala-319–Thr-406. Cys-240 and Cys-293 form a disulfide bridge. Residues Asn-309, Asn-327, and Asn-457 are each glycosylated (N-linked (GlcNAc...) asparagine). A disulfide bond links Cys-434 and Cys-503. Residues Val-529–Ile-549 form a helical membrane-spanning segment. Residues Ala-550–Ser-1048 lie on the Cytoplasmic side of the membrane. Phosphotyrosine; by autocatalysis is present on residues Tyr-558, Tyr-575, and Tyr-577. Residues Leu-596 to Leu-957 form the Protein kinase domain. ATP is bound by residues Leu-602–Val-610 and Lys-630. 5 positions are modified to phosphotyrosine; by autocatalysis: Tyr-735, Tyr-746, Tyr-758, Tyr-766, and Tyr-770. Asp-821 acts as the Proton acceptor in catalysis. Residues Tyr-852 and Tyr-1036 each carry the phosphotyrosine; by autocatalysis modification.

Belongs to the protein kinase superfamily. Tyr protein kinase family. CSF-1/PDGF receptor subfamily. As to quaternary structure, interacts with homodimeric PDGFB and PDGFD, and with heterodimers formed by PDGFA and PDGFB. Monomer in the absence of bound ligand. Interaction with homodimeric PDGFB, heterodimers formed by PDGFA and PDGFB or homodimeric PDGFD, leads to receptor dimerization, where both PDGFRA homodimers and heterodimers with PDGFRB are observed. In terms of processing, ubiquitinated. After autophosphorylation, the receptor is polyubiquitinated, leading to its degradation. Post-translationally, autophosphorylated on tyrosine residues upon ligand binding. Autophosphorylation occurs in trans, i.e. one subunit of the dimeric receptor phosphorylates tyrosine residues on the other subunit.

The protein localises to the cell membrane. It is found in the cytoplasmic vesicle. The protein resides in the lysosome lumen. It catalyses the reaction L-tyrosyl-[protein] + ATP = O-phospho-L-tyrosyl-[protein] + ADP + H(+). Its activity is regulated as follows. Present in an inactive conformation in the absence of bound ligand. Binding of PDGFB and/or PDGFD leads to dimerization and activation by autophosphorylation on tyrosine residues. Functionally, tyrosine-protein kinase that acts as a cell-surface receptor for homodimeric PDGFB and PDGFD and for heterodimers formed by PDGFA and PDGFB, and plays an essential role in the regulation of embryonic development, cell proliferation, survival, differentiation, chemotaxis and migration. Plays an essential role in blood vessel development by promoting proliferation, migration and recruitment of pericytes and smooth muscle cells to endothelial cells. Required for normal development of the cardiovascular system. Required for normal recruitment of pericytes (mesangial cells) in the kidney glomerulus, and for normal formation of a branched network of capillaries in kidney glomeruli. Promotes rearrangement of the actin cytoskeleton and the formation of membrane ruffles. Binding of its cognate ligands - homodimeric PDGFB, heterodimers formed by PDGFA and PDGFB or homodimeric PDGFD -leads to the activation of several signaling cascades; the response depends on the nature of the bound ligand and is modulated by the formation of heterodimers between PDGFRA and PDGFRB. Receptor signaling is down-regulated by protein phosphatases that dephosphorylate the receptor and its down-stream effectors, and by rapid internalization of the activated receptor. This chain is Platelet-derived growth factor receptor beta (pdgfrb), found in Takifugu rubripes (Japanese pufferfish).